The sequence spans 273 residues: Dermonecrotic toxin LvSicTox-alphaIC1ai (273 aa).

His-5 is an active-site residue. Glu-25 and Asp-27 together coordinate Mg(2+). His-41 acts as the Nucleophile in catalysis. Disulfide bonds link Cys-45-Cys-51 and Cys-47-Cys-190. Asp-85 is a Mg(2+) binding site.

Belongs to the arthropod phospholipase D family. Class II subfamily. It depends on Mg(2+) as a cofactor. In terms of tissue distribution, expressed by the venom gland.

The protein localises to the secreted. The enzyme catalyses an N-(acyl)-sphingosylphosphocholine = an N-(acyl)-sphingosyl-1,3-cyclic phosphate + choline. The catalysed reaction is an N-(acyl)-sphingosylphosphoethanolamine = an N-(acyl)-sphingosyl-1,3-cyclic phosphate + ethanolamine. It carries out the reaction a 1-acyl-sn-glycero-3-phosphocholine = a 1-acyl-sn-glycero-2,3-cyclic phosphate + choline. It catalyses the reaction a 1-acyl-sn-glycero-3-phosphoethanolamine = a 1-acyl-sn-glycero-2,3-cyclic phosphate + ethanolamine. Dermonecrotic toxins cleave the phosphodiester linkage between the phosphate and headgroup of certain phospholipids (sphingolipid and lysolipid substrates), forming an alcohol (often choline) and a cyclic phosphate. This toxin acts on sphingomyelin (SM). It may also act on ceramide phosphoethanolamine (CPE), lysophosphatidylcholine (LPC) and lysophosphatidylethanolamine (LPE), but not on lysophosphatidylserine (LPS), and lysophosphatidylglycerol (LPG). It acts by transphosphatidylation, releasing exclusively cyclic phosphate products as second products. Induces dermonecrosis, hemolysis, increased vascular permeability, edema, inflammatory response, and platelet aggregation. The polypeptide is Dermonecrotic toxin LvSicTox-alphaIC1ai (Loxosceles variegata (Recluse spider)).